The chain runs to 334 residues: Holliday junction branch migration complex subunit RuvB (334 aa).

The large ATPase domain (RuvB-L) stretch occupies residues 4 to 184 (ADRLIQPQLQ…FGIPLRLEFY (181 aa)). ATP is bound by residues R24, G65, K68, T69, T70, 131–133 (EDY), R174, Y184, and R221. Residue T69 participates in Mg(2+) binding. The small ATPAse domain (RuvB-S) stretch occupies residues 185–255 (NVKDLSTIVS…VAEHALDLLD (71 aa)). Residues 258–334 (GEGFDYMDRK…YLHFGMIKPE (77 aa)) form a head domain (RuvB-H) region. Positions 294, 313, and 318 each coordinate DNA.

This sequence belongs to the RuvB family. As to quaternary structure, homohexamer. Forms an RuvA(8)-RuvB(12)-Holliday junction (HJ) complex. HJ DNA is sandwiched between 2 RuvA tetramers; dsDNA enters through RuvA and exits via RuvB. An RuvB hexamer assembles on each DNA strand where it exits the tetramer. Each RuvB hexamer is contacted by two RuvA subunits (via domain III) on 2 adjacent RuvB subunits; this complex drives branch migration. In the full resolvosome a probable DNA-RuvA(4)-RuvB(12)-RuvC(2) complex forms which resolves the HJ.

Its subcellular location is the cytoplasm. The enzyme catalyses ATP + H2O = ADP + phosphate + H(+). Its function is as follows. The RuvA-RuvB-RuvC complex processes Holliday junction (HJ) DNA during genetic recombination and DNA repair, while the RuvA-RuvB complex plays an important role in the rescue of blocked DNA replication forks via replication fork reversal (RFR). RuvA specifically binds to HJ cruciform DNA, conferring on it an open structure. The RuvB hexamer acts as an ATP-dependent pump, pulling dsDNA into and through the RuvAB complex. RuvB forms 2 homohexamers on either side of HJ DNA bound by 1 or 2 RuvA tetramers; 4 subunits per hexamer contact DNA at a time. Coordinated motions by a converter formed by DNA-disengaged RuvB subunits stimulates ATP hydrolysis and nucleotide exchange. Immobilization of the converter enables RuvB to convert the ATP-contained energy into a lever motion, pulling 2 nucleotides of DNA out of the RuvA tetramer per ATP hydrolyzed, thus driving DNA branch migration. The RuvB motors rotate together with the DNA substrate, which together with the progressing nucleotide cycle form the mechanistic basis for DNA recombination by continuous HJ branch migration. Branch migration allows RuvC to scan DNA until it finds its consensus sequence, where it cleaves and resolves cruciform DNA. This is Holliday junction branch migration complex subunit RuvB from Shewanella sp. (strain MR-7).